Consider the following 542-residue polypeptide: Homeobox and leucine zipper protein Homez (542 aa).

The segment at residues 55-114 (WTQAIQTSELDGNEHLLQAFSYFPYPSLADIALLCLRHGLQMEKVKTWFMAQRLRCGISW) is a DNA-binding region (homeobox 1). Residues 165–193 (LSPLAPSEQPTHMKGLKVEPEEPSQVSQL) are disordered. Residues Lys-181 and Lys-201 each participate in a glycyl lysine isopeptide (Lys-Gly) (interchain with G-Cter in SUMO2) cross-link. Residues 250 to 307 (VHQPDKPASVSLLDNSCKEESEPSGIPPSSSTSSPSFQALANGTTATPKPLQPLGCIS) are disordered. A compositionally biased stretch (low complexity) spans 272-285 (PSGIPPSSSTSSPS). Residues 286 to 296 (FQALANGTTAT) show a composition bias toward polar residues. A Phosphoserine modification is found at Ser-345. DNA-binding regions (homeobox) lie at residues 349 to 409 (QHQR…KHGQ) and 443 to 502 (TPPL…AEVV). A Nuclear localization signal motif is present at residues 352–357 (RKTKRK). 2 disordered regions span residues 424-454 (FQDP…PPPD) and 501-542 (VVVC…IIWD). Residue Thr-443 is modified to Phosphothreonine. A compositionally biased stretch (pro residues) spans 444 to 454 (PPLPAPPPPPD). Over residues 505–542 (LDEEDEEDEEDELPEDGEEEEEEEEDDDDGDDDVIIWD) the composition is skewed to acidic residues.

Homodimer or heterodimer (Potential). Interacts with HOXC8. In terms of tissue distribution, ubiquitous. Strongly expressed in testis.

The protein resides in the nucleus. Its function is as follows. May function as a transcriptional regulator. This Mus musculus (Mouse) protein is Homeobox and leucine zipper protein Homez (Homez).